Here is a 355-residue protein sequence, read N- to C-terminus: Type II restriction enzyme CfrBI (355 aa).

The enzyme catalyses Endonucleolytic cleavage of DNA to give specific double-stranded fragments with terminal 5'-phosphates.. Its function is as follows. A P subtype restriction enzyme that recognizes the double-stranded sequence 5'-CCWWGG-3' and cleaves after C-1. The polypeptide is Type II restriction enzyme CfrBI (Citrobacter freundii).